Reading from the N-terminus, the 140-residue chain is L-fucose mutarotase (140 aa).

The Proton donor role is filled by His-22. Substrate is bound by residues Asp-30, Arg-107, and 129–131 (YGN).

It belongs to the RbsD / FucU family. FucU mutarotase subfamily. In terms of assembly, homodecamer.

The protein resides in the cytoplasm. It carries out the reaction alpha-L-fucose = beta-L-fucose. Its pathway is carbohydrate metabolism; L-fucose metabolism. In terms of biological role, involved in the anomeric conversion of L-fucose. In Klebsiella pneumoniae (strain 342), this protein is L-fucose mutarotase.